The sequence spans 223 residues: Probable cell wall protein PGA61 (223 aa).

An N-terminal signal peptide occupies residues 1–16; sequence MKSGLLLAVILPVAFA. N-linked (GlcNAc...) asparagine glycosylation occurs at Asn-25. The interval 83 to 134 is disordered; it reads GAPSSSSTPTSSTETTSSTEAETTEAETTEQPSSSTSSNTESSKTTILETPS. Low complexity-rich tracts occupy residues 84 to 103 and 111 to 128; these read APSS…STEA and TEQP…SKTT. Asn-188 carries N-linked (GlcNAc...) asparagine glycosylation. Asn-202 carries GPI-anchor amidated asparagine lipidation. Positions 203–223 are cleaved as a propeptide — removed in mature form; that stretch reads GAGRAAVIGSGSLLALLLNFI.

The protein belongs to the IHD1 family. In terms of processing, the GPI-anchor is attached to the protein in the endoplasmic reticulum and serves to target the protein to the cell surface. There, the glucosamine-inositol phospholipid moiety is cleaved off and the GPI-modified mannoprotein is covalently attached via its lipidless GPI glycan remnant to the 1,6-beta-glucan of the outer cell wall layer.

It localises to the secreted. It is found in the cell wall. The protein resides in the membrane. Its function is as follows. Probable GPI-anchored cell wall protein that may be involved in cell wall organization, hyphal growth, as well as in virulence. This Candida albicans (strain SC5314 / ATCC MYA-2876) (Yeast) protein is Probable cell wall protein PGA61 (PGA61).